The sequence spans 464 residues: Arginine biosynthesis bifunctional protein ArgJ, chloroplastic (464 aa).

Substrate contacts are provided by T208, K234, T245, E332, N459, and T464. The Nucleophile role is filled by T245.

It belongs to the ArgJ family. In terms of assembly, heterodimer of an alpha and a beta chain.

It localises to the plastid. The protein localises to the chloroplast. It catalyses the reaction N(2)-acetyl-L-ornithine + L-glutamate = N-acetyl-L-glutamate + L-ornithine. The enzyme catalyses L-glutamate + acetyl-CoA = N-acetyl-L-glutamate + CoA + H(+). Its pathway is amino-acid biosynthesis; L-arginine biosynthesis; L-ornithine and N-acetyl-L-glutamate from L-glutamate and N(2)-acetyl-L-ornithine (cyclic): step 1/1. It functions in the pathway amino-acid biosynthesis; L-arginine biosynthesis; N(2)-acetyl-L-ornithine from L-glutamate: step 1/4. Its function is as follows. Catalyzes two activities which are involved in the cyclic version of arginine biosynthesis: the synthesis of acetylglutamate from glutamate and acetyl-CoA, and of ornithine by transacetylation between acetylornithine and glutamate. This Sorghum bicolor (Sorghum) protein is Arginine biosynthesis bifunctional protein ArgJ, chloroplastic.